The chain runs to 348 residues: MKRYLITSDGTVIAGYGYGSPVTGYGELVFTTSMTGYLESMTDPSYVGQILVFASPTIANYELRKGVMESDRVKVSGIVTRDAHINMPAGTLGLDFDRFLRDEGIPAIDGVDTRLLVRKIRQGGVLRAYIADDPQGHSDFPDPMSENLVARAVDARGVKNIRGKGERRILFIDLGSKKTLRDMMLEHFSLIMASADSDLDAIDKYDAIFVSNGPGDPDHPSLRPVVNFLKRNIGVKPIFGICFGLQIIALAYGSKTYKMKFGHRGSNHAVTDGNRIYVTTHNHGYAVDPDTVRDFHVRERDINDGTIEMIEDGMMMAVQYHPEASPGPHDTRWFFSEMRRRTEDAAKG.

Residues 1–167 (MKRYLITSDG…VKNIRGKGER (167 aa)) form a CPSase region. 3 residues coordinate L-glutamine: S45, G213, and G215. Residues 168-348 (RILFIDLGSK…RRRTEDAAKG (181 aa)) enclose the Glutamine amidotransferase type-1 domain. Residue C242 is the Nucleophile of the active site. L-glutamine contacts are provided by F243, Q246, N282, G284, and Y285. Catalysis depends on residues H321 and E323.

It belongs to the CarA family. As to quaternary structure, composed of two chains; the small (or glutamine) chain promotes the hydrolysis of glutamine to ammonia, which is used by the large (or ammonia) chain to synthesize carbamoyl phosphate. Tetramer of heterodimers (alpha,beta)4.

The enzyme catalyses hydrogencarbonate + L-glutamine + 2 ATP + H2O = carbamoyl phosphate + L-glutamate + 2 ADP + phosphate + 2 H(+). It carries out the reaction L-glutamine + H2O = L-glutamate + NH4(+). It functions in the pathway amino-acid biosynthesis; L-arginine biosynthesis; carbamoyl phosphate from bicarbonate: step 1/1. The protein operates within pyrimidine metabolism; UMP biosynthesis via de novo pathway; (S)-dihydroorotate from bicarbonate: step 1/3. Functionally, small subunit of the glutamine-dependent carbamoyl phosphate synthetase (CPSase). CPSase catalyzes the formation of carbamoyl phosphate from the ammonia moiety of glutamine, carbonate, and phosphate donated by ATP, constituting the first step of 2 biosynthetic pathways, one leading to arginine and/or urea and the other to pyrimidine nucleotides. The small subunit (glutamine amidotransferase) binds and cleaves glutamine to supply the large subunit with the substrate ammonia. This is Carbamoyl phosphate synthase small chain from Thermoplasma acidophilum (strain ATCC 25905 / DSM 1728 / JCM 9062 / NBRC 15155 / AMRC-C165).